Reading from the N-terminus, the 183-residue chain is Protein Syd (183 aa).

This sequence belongs to the Syd family.

The protein resides in the cell inner membrane. Functionally, interacts with the SecY protein in vivo. May bind preferentially to an uncomplexed state of SecY, thus functioning either as a chelating agent for excess SecY in the cell or as a regulatory factor that negatively controls the translocase function. The polypeptide is Protein Syd (Aliivibrio fischeri (strain MJ11) (Vibrio fischeri)).